Reading from the N-terminus, the 61-residue chain is Potassium channel toxin alpha-KTx 6.8 (61 aa).

An N-terminal signal peptide occupies residues 1–23 (MNAKFILLLLVVTTTILLPDTQG). 4 disulfides stabilise this stretch: cysteine 29-cysteine 50, cysteine 35-cysteine 55, cysteine 39-cysteine 57, and cysteine 45-cysteine 60. Cysteine 60 carries the cysteine amide modification.

It belongs to the short scorpion toxin superfamily. Potassium channel inhibitor family. Alpha-KTx 06 subfamily. In terms of tissue distribution, expressed by the venom gland.

It is found in the secreted. Blocker of voltage-gated potassium channels. The chain is Potassium channel toxin alpha-KTx 6.8 from Opistophthalmus carinatus (African yellow leg scorpion).